Reading from the N-terminus, the 552-residue chain is Cytochrome P450 monooxyhenase eriI (552 aa).

The chain crosses the membrane as a helical span at residues Phe-9 to Val-26. N-linked (GlcNAc...) asparagine glycans are attached at residues Asn-50 and Asn-447. Cys-495 contributes to the heme binding site.

Belongs to the cytochrome P450 family. The cofactor is heme.

It is found in the membrane. The enzyme catalyses (-)-cyatha-3,12-diene + reduced [NADPH--hemoprotein reductase] + O2 = erinacol + oxidized [NADPH--hemoprotein reductase] + H2O + H(+). The protein operates within secondary metabolite biosynthesis. Its function is as follows. Cytochrome P450 monooxygenase; part of the gene cluster that mediates the biosynthesis of erinacines, cyathane-xylosides that show unique biological activities, including leishmanicidal activity, stimulating activity for nerve growth-factor synthesis, and agonistic activity toward the kappa opioid receptor. Within the pathway, eriI hydroxylates cyatha-3,12-diene at C-14 of the seven-membered ring to yield erinacol. The first step of the erinacines biosynthesis pathway is catalyzed by the geranylgeranyl diphosphate (GGPP) synthase eriE via conversion of farnesyl pyrophosphate and isopentyl pyrophosphate into geranylgeranyl pyrophosphate (GGPP). GGPP is then substrate of the diterpene cyclase eriG for the production of cyatha-3,12-diene. The cytochrome P450 monooxygenase eriI then hydroxylates cyatha-3,12-diene at C-14 of the seven-membered ring to produce erinacol, which is further hydroxylated at C-15 by the cytochrome P450 monooxygenase eriC to yield cyathadiol. The cytochrome P450 monooxygenase eriA then catalyzes C-11 hydroxylation in the presence of the short chain dehydrogenase/reductase (SDR) eriH, which leads to the production of cyathatriol. The acetyltransferase eriL converts cyathatriol into 11-O-acetyl-cyathatriol. The SDR eriH catalyzes further oxidation of 11-O-acetyl-cyathatriol into 1-O-acetylcyathin A3. Finally, the glycosyl transferase eriJ tranfers xylose from UDP-xylose onto C-14 of 11-O-acetyl-cyathatriol to form eracine Q. EriJ is also able to convert 11-O-acetyl-cyathatriol to eracine Q2 by using UDP-D-glucose as cosubstrate, but at a lower rate. Cytochrome P450 monooxygenase; part of the gene cluster that mediates the biosynthesis of erinacines, cyathane-xylosides that show unique biological activities, including leishmanicidal activity, stimulating activity for nerve growth-factor synthesis, and agonistic activity toward the kappa opioid receptor. The geranylgeranyl diphosphate (GGPP) synthase eriE catalyzes the first step in erinacines biosynthesis via conversion of farnesyl pyrophosphate and isopentyl pyrophosphate into geranylgeranyl pyrophosphate (GGPP). GGPP is then substrate of the diterpene cyclase eriG for the production of cyatha-3,12-diene. EriG is unable to use geranyl diphosphate (GPP) or farnesyl diphosphate (FPP) as substrates. The cytochrome P450 monooxygenase eriI then hydroxylates cyatha-3,12-diene at C-14 of the seven-membered ring to produce erinacol, which is further hydroxylated at C-15 by the cytochrome P450 monooxygenase eriC to yield cyathadiol. The cytochrome P450 monooxygenase eriA then catalyzes C-11 hydroxylation in the presence of the short chain dehydrogenase/reductase (SDR) eriH, which leads to the production of cyathatriol. The acetyltransferase eriL converts cyathatriol into 11-O-acetyl-cyathatriol. The SDR eriH catalyzes further oxidation of 11-O-acetyl-cyathatriol into 1-O-acetylcyathin A3. Finally, the glycosyl transferase eriJ tranfers xylose from UDP-xylose onto C-14 of 11-O-acetyl-cyathatriol to form eracine Q. EriJ is also able to convert 11-O-acetyl-cyathatriol to eracine Q2 by using UDP-D-glucose as cosubstrate, but at a lower rate. In the absence of eriL and eriJ, the SDR eriH is able to convert cyathatriol to cyathin A3; this is likely a switching mechanism in the biosynthesis of cyathins (C-14 ketogroup)and erinacines (C-14 glycosylated group). The roles of the SDR eriB, the polyprenyl transferase eriF and the dehydrogenase eriK have still to be identified. In Hericium erinaceus (Lion's mane mushroom), this protein is Cytochrome P450 monooxyhenase eriI.